The sequence spans 189 residues: Testis-expressed protein 22 (189 aa).

The disordered stretch occupies residues 1–120; that stretch reads MDSRQQRPQR…TQSVPTPPLQ (120 aa). Residues 14–24 are compositionally biased toward low complexity; it reads QWQLAQEQRQQ. Positions 70 to 87 are enriched in basic and acidic residues; it reads IDERRRLALQRMQERTDT. A compositionally biased stretch (low complexity) spans 103–114; sequence QQTETSPSTQSV.

Mainly expressed in spermatocytes and spermatids in testis.

It localises to the cytoplasm. It is found in the cytoplasmic vesicle. The protein localises to the secretory vesicle. Its subcellular location is the acrosome. This is Testis-expressed protein 22 (Tex22) from Mus musculus (Mouse).